The primary structure comprises 349 residues: Farnesyl pyrophosphate synthase vrtD (349 aa).

Residues lysine 53, arginine 56, and glutamine 92 each contribute to the isopentenyl diphosphate site. Aspartate 99 and aspartate 103 together coordinate Mg(2+). Arginine 108 lines the dimethylallyl diphosphate pocket. Arginine 109 is a binding site for isopentenyl diphosphate. Dimethylallyl diphosphate contacts are provided by lysine 196, threonine 197, glutamine 236, lysine 253, and lysine 262.

It belongs to the FPP/GGPP synthase family. Mg(2+) is required as a cofactor.

The catalysed reaction is isopentenyl diphosphate + dimethylallyl diphosphate = (2E)-geranyl diphosphate + diphosphate. It catalyses the reaction isopentenyl diphosphate + (2E)-geranyl diphosphate = (2E,6E)-farnesyl diphosphate + diphosphate. It participates in secondary metabolite biosynthesis; terpenoid biosynthesis. Functionally, farnesyl pyrophosphate synthase; part of the gene cluster that mediates the biosynthesis of viridicatumtoxin, a tetracycline-like fungal meroterpenoid with a unique, fused spirobicyclic ring system. The first step of the pathway is the production of the malonamoyl-CoA starter unit for the polyketide synthase vrtA. The aldolase vrtJ may be involved in the synthesis of the malonamate substrate for malonamoyl-CoA synthetase vrtB. The polyketide synthase vrtA then may utilize the malonamoyl-CoA starter unit, followed by sequential condensation of eight malonyl-CoA units to form the polyketide backbone. The cyclization of the last ring could be mediated by the lactamase-like protein vrtG. The proposed post-PKS tailoring steps are a hydroxylation at C5 catalyzed the cytochrome P450 monooxygenase vrtE, a hydroxylation at C12a catalyzed by VrtH and/or VrtI, and an O-methylation by the O-methyltransferase vrtF. VrtC is then proposed to catalyze the transfer of a geranyl group synthesized by vrtD to the aromatic C ring of the tetracyclic polyketide intermediate of viridicatumtoxin to yield previridicatumtoxin. Finally, the cytochrome P450 monooxygenase vrtK catalyzes the spirocyclization of the geranyl moiety of previridicatumtoxin to afford viridicatumtoxin. This Penicillium aethiopicum protein is Farnesyl pyrophosphate synthase vrtD.